The sequence spans 516 residues: Gamma-aminobutyrate transaminase 1, mitochondrial (516 aa).

Residues 1–47 constitute a mitochondrion transit peptide; it reads MVIARGLLRSNASSSSSQAINLLKYVTSTGSLQGHTQNLCDASTRHF. Pyridoxal 5'-phosphate is bound at residue 171–172; that stretch reads GS. A substrate-binding site is contributed by Tyr204. Asp311 contributes to the pyridoxal 5'-phosphate binding site. Substrate is bound at residue Lys340. At Lys340 the chain carries N6-(pyridoxal phosphate)lysine.

This sequence belongs to the class-III pyridoxal-phosphate-dependent aminotransferase family. In terms of tissue distribution, expressed in roots, stems and panicles.

It localises to the mitochondrion. It carries out the reaction 4-aminobutanoate + pyruvate = succinate semialdehyde + L-alanine. The enzyme catalyses 4-aminobutanoate + glyoxylate = succinate semialdehyde + glycine. Functionally, transaminase that degrades gamma-amino butyric acid (GABA) and uses pyruvate as amino-group acceptor, but not 2-oxoglutarate. Not involved in the interaction with blast fungus. In Oryza sativa subsp. japonica (Rice), this protein is Gamma-aminobutyrate transaminase 1, mitochondrial (OSL2).